The sequence spans 333 residues: HTH-type transcriptional repressor PurR (333 aa).

In terms of domain architecture, HTH lacI-type spans Ala2 to Val56. Positions Ile4–Asn23 form a DNA-binding region, H-T-H motif. Residues Ser48–Val56 mediate DNA binding. Residues Tyr73, Lys189, Thr191, Phe220, and Asp274 each coordinate hypoxanthine.

As to quaternary structure, homodimer.

The protein operates within purine metabolism; purine nucleotide biosynthesis [regulation]. Its function is as follows. Is the main repressor of the genes involved in the de novo synthesis of purine nucleotides, regulating purB, purC, purEK, purF, purHD, purL, purMN and guaBA expression. PurR is allosterically activated to bind its cognate DNA by binding the purine corepressors, hypoxanthine or guanine, thereby effecting transcription repression. The chain is HTH-type transcriptional repressor PurR from Histophilus somni (strain 129Pt) (Haemophilus somnus).